We begin with the raw amino-acid sequence, 207 residues long: High frequency lysogenization protein HflD homolog (207 aa).

It belongs to the HflD family.

Its subcellular location is the cytoplasm. The protein localises to the cell inner membrane. This chain is High frequency lysogenization protein HflD homolog, found in Azotobacter vinelandii (strain DJ / ATCC BAA-1303).